A 269-amino-acid chain; its full sequence is Iron(3+)-hydroxamate import ATP-binding protein FhuC (269 aa).

Positions 4-240 constitute an ABC transporter domain; the sequence is LSTEQLGIGY…DILKQVFQID (237 aa). Residues 36-43 and 160-171 each bind ATP; these read GPNGCGKS and LLLLDEPTTYLD.

The protein belongs to the ABC transporter superfamily. Iron (Fe3+)-hydroxamate importer (TC 3.A.1.14.7) family. The complex is composed of an ATP-binding protein (FhuC), two transmembrane proteins (FhuB and FhuG) and a solute-binding protein (FhuD or YxeB).

The protein resides in the cell membrane. The catalysed reaction is ATP + H2O + Fe(3+)-hydroxamate complex-[hydroxamate-binding protein]Side 1 = ADP + phosphate + Fe(3+)-hydroxamate complexSide 2 + [hydroxamate-binding protein]Side 1.. In terms of biological role, part of the ABC transporter complex FhuBGCD involved in iron(3+)-hydroxamate import. Responsible for energy coupling to the transport system. The polypeptide is Iron(3+)-hydroxamate import ATP-binding protein FhuC (fhuC) (Bacillus subtilis (strain 168)).